The primary structure comprises 464 residues: UDP-N-acetylmuramoylalanine--D-glutamate ligase (464 aa).

ATP is bound at residue 112 to 118; that stretch reads GTDGKTT.

The protein belongs to the MurCDEF family.

The protein resides in the cytoplasm. The catalysed reaction is UDP-N-acetyl-alpha-D-muramoyl-L-alanine + D-glutamate + ATP = UDP-N-acetyl-alpha-D-muramoyl-L-alanyl-D-glutamate + ADP + phosphate + H(+). Its pathway is cell wall biogenesis; peptidoglycan biosynthesis. In terms of biological role, cell wall formation. Catalyzes the addition of glutamate to the nucleotide precursor UDP-N-acetylmuramoyl-L-alanine (UMA). This is UDP-N-acetylmuramoylalanine--D-glutamate ligase from Chlorobium chlorochromatii (strain CaD3).